A 257-amino-acid polypeptide reads, in one-letter code: Major prion protein (257 aa).

Residues 1–24 (MVKSHIGGWILLLFVATWSDVGLC) form the signal peptide. The tract at residues 25–234 (KKRPKPGGWN…ESEAYYQRGA (210 aa)) is interaction with GRB2, ERI3 and SYN1. The disordered stretch occupies residues 28–110 (PKPGGWNTGG…GQWGKPNKPK (83 aa)). Composition is skewed to gly residues over residues 33–48 (WNTGGGSRYPGQGSPG) and 55–101 (QGGG…GSHG). 5 consecutive repeat copies span residues 54–62 (PQGGGGWGQ), 63–70 (PHGGGWGQ), 71–78 (PHGGGWGQ), 79–86 (PHGGGWGQ), and 87–95 (PHGGGGWGQ). The segment at 54 to 95 (PQGGGGWGQPHGGGWGQPHGGGWGQPHGGGWGQPHGGGGWGQ) is 5 X 8 AA tandem repeats of P-H-G-G-G-W-G-Q. 12 residues coordinate Cu(2+): His-64, Gly-65, Gly-66, His-72, Gly-73, Gly-74, His-80, Gly-81, Gly-82, His-88, Gly-90, and Gly-91. Cys-183 and Cys-218 are joined by a disulfide. 2 N-linked (GlcNAc...) asparagine glycosylation sites follow: Asn-185 and Asn-201. Ala-234 carries GPI-anchor amidated alanine lipidation. The propeptide at 235–257 (SAILFSPPPVILLISLLILLIVG) is removed in mature form.

The protein belongs to the prion family. As to quaternary structure, monomer and homodimer. Has a tendency to aggregate into amyloid fibrils containing a cross-beta spine, formed by a steric zipper of superposed beta-strands. Soluble oligomers may represent an intermediate stage on the path to fibril formation. Copper binding may promote oligomerization. Interacts with GRB2, APP, ERI3/PRNPIP and SYN1. Mislocalized cytosolically exposed PrP interacts with MGRN1; this interaction alters MGRN1 subcellular location and causes lysosomal enlargement. Interacts with KIAA1191.

It is found in the cell membrane. It localises to the golgi apparatus. Functionally, its primary physiological function is unclear. Has cytoprotective activity against internal or environmental stresses. May play a role in neuronal development and synaptic plasticity. May be required for neuronal myelin sheath maintenance. May play a role in iron uptake and iron homeostasis. Soluble oligomers are toxic to cultured neuroblastoma cells and induce apoptosis (in vitro). Association with GPC1 (via its heparan sulfate chains) targets PRNP to lipid rafts. Also provides Cu(2+) or Zn(2+) for the ascorbate-mediated GPC1 deaminase degradation of its heparan sulfate side chains. This Vulpes lagopus (Arctic fox) protein is Major prion protein.